An 872-amino-acid chain; its full sequence is Alanine--tRNA ligase (872 aa).

Residues histidine 567, histidine 571, cysteine 669, and histidine 673 each contribute to the Zn(2+) site.

This sequence belongs to the class-II aminoacyl-tRNA synthetase family. Requires Zn(2+) as cofactor.

The protein localises to the cytoplasm. The enzyme catalyses tRNA(Ala) + L-alanine + ATP = L-alanyl-tRNA(Ala) + AMP + diphosphate. Catalyzes the attachment of alanine to tRNA(Ala) in a two-step reaction: alanine is first activated by ATP to form Ala-AMP and then transferred to the acceptor end of tRNA(Ala). Also edits incorrectly charged Ser-tRNA(Ala) and Gly-tRNA(Ala) via its editing domain. This chain is Alanine--tRNA ligase, found in Streptococcus pneumoniae serotype 4 (strain ATCC BAA-334 / TIGR4).